Here is a 480-residue protein sequence, read N- to C-terminus: UDP-glucose 6-dehydrogenase 2 (480 aa).

Residues 8 to 13 (GAGYVG), aspartate 33, arginine 38, 86 to 90 (VNTPT), 127 to 128 (ST), and glutamate 161 each bind NAD(+). Substrate is bound by residues 157–161 (EFLAE), 216–223 (KLAANAFL), and 256–269 (RIGP…VGFG). The Nucleophile role is filled by cysteine 272. 272–275 (CFQK) is an NAD(+) binding site. 334-335 (FK) is a binding site for substrate. Position 342 (arginine 342) interacts with NAD(+). A substrate-binding site is contributed by arginine 447.

This sequence belongs to the UDP-glucose/GDP-mannose dehydrogenase family. In terms of tissue distribution, preferentially expressed in roots.

The enzyme catalyses UDP-alpha-D-glucose + 2 NAD(+) + H2O = UDP-alpha-D-glucuronate + 2 NADH + 3 H(+). The protein operates within nucleotide-sugar biosynthesis; UDP-alpha-D-glucuronate biosynthesis; UDP-alpha-D-glucuronate from UDP-alpha-D-glucose: step 1/1. Inhibited by UDP-xylose. Involved in the biosynthesis of UDP-glucuronic acid (UDP-GlcA), providing nucleotide sugars for cell-wall polymers. Required for the formation of cell wall ingrowths on the outer cell walls of nematode-induced syncytia. This chain is UDP-glucose 6-dehydrogenase 2 (UGD2), found in Arabidopsis thaliana (Mouse-ear cress).